The following is a 364-amino-acid chain: Capsular polysaccharide phosphotransferase cps1A (364 aa).

The protein belongs to the stealth family.

Functionally, part of a capsular polysaccharide synthesis locus. The sequence is that of Capsular polysaccharide phosphotransferase cps1A (cps1A) from Actinobacillus pleuropneumoniae (Haemophilus pleuropneumoniae).